A 198-amino-acid polypeptide reads, in one-letter code: Proteasome subunit beta 2 (198 aa).

A propeptide spans 1 to 4 (MVLA) (removed in mature form; by autocatalysis). Catalysis depends on T5, which acts as the Nucleophile.

Belongs to the peptidase T1B family. As to quaternary structure, the 20S proteasome core is composed of 14 alpha and 14 beta subunits that assemble into four stacked heptameric rings, resulting in a barrel-shaped structure. The two inner rings, each composed of seven catalytic beta subunits, are sandwiched by two outer rings, each composed of seven alpha subunits. The catalytic chamber with the active sites is on the inside of the barrel. Has a gated structure, the ends of the cylinder being occluded by the N-termini of the alpha-subunits. Is capped at one or both ends by the proteasome regulatory ATPase, PAN.

Its subcellular location is the cytoplasm. It catalyses the reaction Cleavage of peptide bonds with very broad specificity.. Its activity is regulated as follows. The formation of the proteasomal ATPase PAN-20S proteasome complex, via the docking of the C-termini of PAN into the intersubunit pockets in the alpha-rings, triggers opening of the gate for substrate entry. Interconversion between the open-gate and close-gate conformations leads to a dynamic regulation of the 20S proteasome proteolysis activity. Its function is as follows. Component of the proteasome core, a large protease complex with broad specificity involved in protein degradation. In Korarchaeum cryptofilum (strain OPF8), this protein is Proteasome subunit beta 2.